The sequence spans 91 residues: Small ribosomal subunit protein bS20 (91 aa).

The segment at 1 to 25 is disordered; sequence MANSPSAKKRAKQAEKRRSHNASLR. The segment covering 7-20 has biased composition (basic residues); the sequence is AKKRAKQAEKRRSH.

It belongs to the bacterial ribosomal protein bS20 family.

Its function is as follows. Binds directly to 16S ribosomal RNA. The protein is Small ribosomal subunit protein bS20 of Azotobacter vinelandii (strain DJ / ATCC BAA-1303).